The primary structure comprises 413 residues: Glutamyl-tRNA reductase (413 aa).

Substrate is bound by residues threonine 49–arginine 52, serine 105, glutamate 110–glutamine 112, and glutamine 116. Cysteine 50 functions as the Nucleophile in the catalytic mechanism. Glycine 185 to isoleucine 190 lines the NADP(+) pocket.

This sequence belongs to the glutamyl-tRNA reductase family. In terms of assembly, homodimer.

It carries out the reaction (S)-4-amino-5-oxopentanoate + tRNA(Glu) + NADP(+) = L-glutamyl-tRNA(Glu) + NADPH + H(+). It participates in porphyrin-containing compound metabolism; protoporphyrin-IX biosynthesis; 5-aminolevulinate from L-glutamyl-tRNA(Glu): step 1/2. Functionally, catalyzes the NADPH-dependent reduction of glutamyl-tRNA(Glu) to glutamate 1-semialdehyde (GSA). The protein is Glutamyl-tRNA reductase of Coxiella burnetii (strain Dugway 5J108-111).